The following is a 219-amino-acid chain: MNKEKAIVVFSGGQDSTTCLFWAKKKYKEVIAVSFDYNQKHKLELDCAKDICKKYNIEHHILDLNLLNQLAPNSLTRQDITVDKSAPKEGVPNSFVDGRNLLFLSFVAVFAKQKGINTIITGVSQSDFSGYPDCRDVFIKSLNVTLNLAMDYEFEIITPLMWINKAETWKMAYDLGVLDIVKEETLTCYNGIKADGCGECPACKLRKKGYWEFEKYLMN.

An ATP-binding site is contributed by 10-20; the sequence is FSGGQDSTTCL. The Zn(2+) site is built by C188, C197, C200, and C203.

This sequence belongs to the QueC family. As to quaternary structure, homodimer. It depends on Zn(2+) as a cofactor.

The catalysed reaction is 7-carboxy-7-deazaguanine + NH4(+) + ATP = 7-cyano-7-deazaguanine + ADP + phosphate + H2O + H(+). It functions in the pathway purine metabolism; 7-cyano-7-deazaguanine biosynthesis. Functionally, catalyzes the ATP-dependent conversion of 7-carboxy-7-deazaguanine (CDG) to 7-cyano-7-deazaguanine (preQ(0)). This is 7-cyano-7-deazaguanine synthase from Clostridium botulinum (strain Kyoto / Type A2).